We begin with the raw amino-acid sequence, 807 residues long: Centrosomal protein of 97 kDa (807 aa).

LRR repeat units follow at residues 34–55 (DTQT…EKCR), 56–77 (NLVQ…AKLI), 78–99 (HLRV…KDLV), 100–121 (HLEW…NSST), 122–143 (SLQH…SKLK), 144–165 (SLKT…SACL), and 168–189 (SLTI…AFLA). In terms of domain architecture, LRRCT spans 208–246 (TPSIPGFDYRPFIVSWCLNLKVLDGYVVSQKESLKAEWL). A disordered region spans residues 306–330 (RSDGYLTSSTPNKRLPLSTEHHSPT). One can recognise an IQ domain in the interval 519–548 (ISKAATKLQSCWRGFYARKYNPKVKDVCYE). Positions 607 to 623 (TANSSENDLPSASNSKH) are enriched in polar residues. Residues 607 to 756 (TANSSENDLP…RPEITTCSDN (150 aa)) form a disordered region. Residues 681–690 (TGRHYNDKVP) are compositionally biased toward basic and acidic residues. Residues 704 to 724 (SQSSKDSFTSEQDSSLLQQYL) show a composition bias toward polar residues.

The protein localises to the cytoplasm. It localises to the cytoskeleton. The protein resides in the microtubule organizing center. It is found in the centrosome. In terms of biological role, acts as a key negative regulator of ciliogenesis in collaboration with ccp110 by capping the mother centriole thereby preventing cilia formation. Required for recruitment of ccp110 to the centrosome. The polypeptide is Centrosomal protein of 97 kDa (cep97) (Xenopus laevis (African clawed frog)).